The chain runs to 200 residues: Small ribosomal subunit protein uS4 (200 aa).

The tract at residues 22–42 is disordered; that stretch reads TGKELEKRPYAPGPHGPGQRK. The 61-residue stretch at 92–152 folds into the S4 RNA-binding domain; it reads SRLDNIVYRL…EKSQNLSVVK (61 aa).

It belongs to the universal ribosomal protein uS4 family. In terms of assembly, part of the 30S ribosomal subunit. Contacts protein S5. The interaction surface between S4 and S5 is involved in control of translational fidelity.

Functionally, one of the primary rRNA binding proteins, it binds directly to 16S rRNA where it nucleates assembly of the body of the 30S subunit. In terms of biological role, with S5 and S12 plays an important role in translational accuracy. The chain is Small ribosomal subunit protein uS4 from Bacillus licheniformis (strain ATCC 14580 / DSM 13 / JCM 2505 / CCUG 7422 / NBRC 12200 / NCIMB 9375 / NCTC 10341 / NRRL NRS-1264 / Gibson 46).